The following is a 421-amino-acid chain: Testin (421 aa).

A PET domain is found at 92-199; that stretch reads MILTNPVAAK…GDVKLPREMN (108 aa). The tract at residues 133–164 is disordered; that stretch reads EKQPVAGSEGAQYRKKQLAKQLPAHDQDPSKC. Basic and acidic residues predominate over residues 155 to 164; that stretch reads PAHDQDPSKC. LIM zinc-binding domains lie at 234-297, 299-359, and 362-421; these read YSCY…CDSE, PRCA…NHAV, and QGCH…KMMS.

The protein belongs to the prickle / espinas / testin family. In terms of assembly, interacts via LIM domain 1 with ZYX. Interacts (via LIM domain 3) with ENAH and VASP. Interacts with ALKBH4, talin, actin, alpha-actinin, GRIP1 and PXN. Interacts (via LIM domain 2) with ACTL7A (via N-terminus). Heterodimer with ACTL7A; the heterodimer interacts with ENAH to form a heterotrimer.

The protein resides in the cytoplasm. It is found in the cell junction. The protein localises to the focal adhesion. Functionally, scaffold protein that may play a role in cell adhesion, cell spreading and in the reorganization of the actin cytoskeleton. Plays a role in the regulation of cell proliferation. May act as a tumor suppressor. The sequence is that of Testin (TES) from Sus scrofa (Pig).